A 262-amino-acid chain; its full sequence is Spindlin-Z (262 aa).

The disordered stretch occupies residues 1-50; sequence MKTPFGKSPGQRSRADAGHAGVSASMMKKRTSHKKHRNNVGPSKPISQPR. Basic residues predominate over residues 27-38; that stretch reads MKKRTSHKKHRN.

Belongs to the SPIN/STSY family. In terms of tissue distribution, expressed in several tissues including testis.

It localises to the nucleus. Its function is as follows. May play a role in mitosis. This Gallus gallus (Chicken) protein is Spindlin-Z (SPINZ).